A 166-amino-acid polypeptide reads, in one-letter code: NAD(P)H-quinone oxidoreductase subunit I, chloroplastic (166 aa).

4Fe-4S ferredoxin-type domains lie at 55–84 and 95–124; these read GRIH…VDWK and LNYS…MTEE. [4Fe-4S] cluster-binding residues include C64, C67, C70, C74, C104, C107, C110, and C114.

It belongs to the complex I 23 kDa subunit family. NDH is composed of at least 16 different subunits, 5 of which are encoded in the nucleus. [4Fe-4S] cluster serves as cofactor.

The protein localises to the plastid. It is found in the chloroplast thylakoid membrane. It catalyses the reaction a plastoquinone + NADH + (n+1) H(+)(in) = a plastoquinol + NAD(+) + n H(+)(out). The catalysed reaction is a plastoquinone + NADPH + (n+1) H(+)(in) = a plastoquinol + NADP(+) + n H(+)(out). In terms of biological role, NDH shuttles electrons from NAD(P)H:plastoquinone, via FMN and iron-sulfur (Fe-S) centers, to quinones in the photosynthetic chain and possibly in a chloroplast respiratory chain. The immediate electron acceptor for the enzyme in this species is believed to be plastoquinone. Couples the redox reaction to proton translocation, and thus conserves the redox energy in a proton gradient. In Marshallia caespitosa (Barbara's buttons), this protein is NAD(P)H-quinone oxidoreductase subunit I, chloroplastic.